We begin with the raw amino-acid sequence, 340 residues long: Cytoskeleton protein RodZ (340 aa).

The Cytoplasmic segment spans residues 1-111 (MNTEATQEKS…LGKQRKKRDG (111 aa)). The HTH cro/C1-type domain occupies 19 to 79 (LRTAREQMGL…RLVHVPEEEL (61 aa)). Positions 30-49 (QQNVAERLCLKLSTIRDIEE) form a DNA-binding region, H-T-H motif. A helical; Signal-anchor for type II membrane protein membrane pass occupies residues 112–132 (WLMIFTWLVLFVVLGLTGAWW). The Periplasmic portion of the chain corresponds to 133 to 340 (WQNHKAAQDD…QVARLTVGAP (208 aa)). Residues 162 to 252 (ALSDDNANGG…AAPLPTGSAA (91 aa)) are disordered. Over residues 183 to 201 (ATANNAPSSVTATSDNGTP) the composition is skewed to polar residues. Over residues 202–233 (AATAQSSQVTASNAAPAANAVNDNTPPVAVAP) the composition is skewed to low complexity.

The protein belongs to the RodZ family.

It localises to the cell inner membrane. Functionally, cytoskeletal protein that is involved in cell-shape control through regulation of the length of the long axis. The protein is Cytoskeleton protein RodZ of Erwinia tasmaniensis (strain DSM 17950 / CFBP 7177 / CIP 109463 / NCPPB 4357 / Et1/99).